The primary structure comprises 957 residues: Glycine dehydrogenase (decarboxylating) (957 aa).

An N6-(pyridoxal phosphate)lysine modification is found at Lys708.

It belongs to the GcvP family. In terms of assembly, the glycine cleavage system is composed of four proteins: P, T, L and H. Pyridoxal 5'-phosphate serves as cofactor.

The catalysed reaction is N(6)-[(R)-lipoyl]-L-lysyl-[glycine-cleavage complex H protein] + glycine + H(+) = N(6)-[(R)-S(8)-aminomethyldihydrolipoyl]-L-lysyl-[glycine-cleavage complex H protein] + CO2. Functionally, the glycine cleavage system catalyzes the degradation of glycine. The P protein binds the alpha-amino group of glycine through its pyridoxal phosphate cofactor; CO(2) is released and the remaining methylamine moiety is then transferred to the lipoamide cofactor of the H protein. This Escherichia coli O8 (strain IAI1) protein is Glycine dehydrogenase (decarboxylating).